Reading from the N-terminus, the 72-residue chain is Gene 42 protein (72 aa).

This is Gene 42 protein (42) from Mycobacterium phage L5 (Mycobacteriophage L5).